Reading from the N-terminus, the 103-residue chain is Histone H4 (103 aa).

A disordered region spans residues 1–32; it reads MNTQSIGAKGKSKAAKGIAKRHRKQSSLSDSI. The span at 10-25 shows a compositional bias: basic residues; it reads GKSKAAKGIAKRHRKQ. An N6-acetyl-N6-methyllysine; alternate modification is found at Lys16. N6-methyllysine; alternate is present on Lys16. Residues 20–24 mediate DNA binding; it reads KRHRK. The residue at position 94 (Lys94) is an N6-glutaryllysine.

It belongs to the histone H4 family. As to quaternary structure, the nucleosome is a histone octamer containing two molecules each of H2A, H2B, H3 and H4 assembled in one H3-H4 heterotetramer and two H2A-H2B heterodimers. The octamer wraps approximately 147 bp of DNA. Glutarylation at Lys-94 (H4K91glu) destabilizes nucleosomes by promoting dissociation of the H2A-H2B dimers from nucleosomes.

It is found in the nucleus. It localises to the chromosome. In terms of biological role, core component of nucleosome. Nucleosomes wrap and compact DNA into chromatin, limiting DNA accessibility to the cellular machineries which require DNA as a template. Histones thereby play a central role in transcription regulation, DNA repair, DNA replication and chromosomal stability. DNA accessibility is regulated via a complex set of post-translational modifications of histones, also called histone code, and nucleosome remodeling. The protein is Histone H4 (HHF1) of Encephalitozoon cuniculi (strain GB-M1) (Microsporidian parasite).